The following is a 325-amino-acid chain: DNA-directed RNA polymerase subunit alpha (325 aa).

Positions 1–238 (MSPKNLLKGF…DHLTVFINFE (238 aa)) are alpha N-terminal domain (alpha-NTD). An alpha C-terminal domain (alpha-CTD) region spans residues 255 to 325 (LKAALSKHVE…MGLSFGMRDF (71 aa)).

This sequence belongs to the RNA polymerase alpha chain family. In terms of assembly, homodimer. The RNAP catalytic core consists of 2 alpha, 1 beta, 1 beta' and 1 omega subunit. When a sigma factor is associated with the core the holoenzyme is formed, which can initiate transcription.

The catalysed reaction is RNA(n) + a ribonucleoside 5'-triphosphate = RNA(n+1) + diphosphate. In terms of biological role, DNA-dependent RNA polymerase catalyzes the transcription of DNA into RNA using the four ribonucleoside triphosphates as substrates. This chain is DNA-directed RNA polymerase subunit alpha, found in Leptospira biflexa serovar Patoc (strain Patoc 1 / Ames).